We begin with the raw amino-acid sequence, 467 residues long: Coiled-coil domain-containing protein 174 (467 aa).

Disordered stretches follow at residues 47 to 76 and 129 to 163; these read INKKPSIWSKQNAGVTSRAEKDAEQKLEEQ and GATRESQIEEERDDDDKEEFSDKDIPPPQDPSEEW. Residues 64-76 show a composition bias toward basic and acidic residues; sequence RAEKDAEQKLEEQ. Positions 64-99 form a coiled coil; sequence RAEKDAEQKLEEQKTLDKAREKLEEKAKLYEKMTKG. The segment covering 136 to 147 has biased composition (acidic residues); it reads IEEERDDDDKEE. A Phosphoserine modification is found at S198. Residues 268-310 adopt a coiled-coil conformation; it reads LEMLREQTTDQRIKRENIKEKRKAMLEARLAKLRQKKMKKSKE. Disordered stretches follow at residues 301-365 and 379-454; these read RQKK…IREW and KQSE…VTFQ. Composition is skewed to basic and acidic residues over residues 349–365 and 379–390; these read IQERRDTKPGVPHIREW and KQSELRAERDPE. Positions 406–415 are enriched in polar residues; sequence PMSSQPQSRP. A compositionally biased stretch (low complexity) spans 423–446; sequence GHSSGQSQEPSSSHTSTPASESSP.

The protein localises to the nucleus. In terms of biological role, probably involved in neuronal development. This Mus musculus (Mouse) protein is Coiled-coil domain-containing protein 174 (Ccdc174).